A 261-amino-acid polypeptide reads, in one-letter code: RING finger and CHY zinc finger domain-containing protein 1 (261 aa).

Residues 13-80 (LAQGPRGCEH…AQQTCEDCST (68 aa)) form a CHY-type zinc finger. The Zn(2+) site is built by cysteine 20, histidine 22, cysteine 33, cysteine 34, cysteine 40, cysteine 43, histidine 44, histidine 50, cysteine 62, cysteine 65, cysteine 75, cysteine 78, cysteine 87, cysteine 90, histidine 101, cysteine 102, cysteine 105, cysteine 108, histidine 118, cysteine 119, cysteine 122, cysteine 125, histidine 134, and cysteine 136. The segment at 82-144 (FGEYYCSICH…KCIENVSRQN (63 aa)) adopts a CTCHY-type zinc-finger fold. The RING-type zinc-finger motif lies at 145–189 (CPICLEDIHTSRVVAHVLPCGHLLHRTCYEEMLKEGYRCPLCMHS).

As to quaternary structure, monomer and homodimer. Interacts with AR, MDM2, KAT5, PLAG1, PLAGL2, COPE, UBE2D2 and GORAB/NTKLBP1. Post-translationally, subject to ubiquitination and proteasomal degradation. Interaction with PLAGL2 or KAT5 enhances protein stability. In terms of tissue distribution, detected in testis, liver, kidney and heart.

It is found in the nucleus. The protein resides in the nucleus speckle. It localises to the cytoplasm. It carries out the reaction S-ubiquitinyl-[E2 ubiquitin-conjugating enzyme]-L-cysteine + [acceptor protein]-L-lysine = [E2 ubiquitin-conjugating enzyme]-L-cysteine + N(6)-ubiquitinyl-[acceptor protein]-L-lysine.. It participates in protein modification; protein ubiquitination. In terms of biological role, E3 ubiquitin-protein ligase that mediates ubiquitination of target proteins, including p53/TP53, TP73, HDAC1 and CDKN1B. Mediates ubiquitination and degradation of p53/TP53; preferentially acts on tetrameric p53/TP53. Catalyzes monoubiquitinates the translesion DNA polymerase POLH. Involved in the ribosome-associated quality control (RQC) pathway, which mediates the extraction of incompletely synthesized nascent chains from stalled ribosomes: RCHY1 acts downstream of NEMF and recognizes CAT tails associated with stalled nascent chains, leading to their ubiquitination and degradation. This Mus musculus (Mouse) protein is RING finger and CHY zinc finger domain-containing protein 1 (Rchy1).